Reading from the N-terminus, the 502-residue chain is UPF0371 protein CLH_2534 (502 aa).

The protein belongs to the UPF0371 family.

The polypeptide is UPF0371 protein CLH_2534 (Clostridium botulinum (strain Alaska E43 / Type E3)).